We begin with the raw amino-acid sequence, 473 residues long: 3-isopropylmalate dehydratase large subunit (473 aa).

[4Fe-4S] cluster-binding residues include Cys354, Cys414, and Cys417.

This sequence belongs to the aconitase/IPM isomerase family. LeuC type 1 subfamily. In terms of assembly, heterodimer of LeuC and LeuD. [4Fe-4S] cluster is required as a cofactor.

The catalysed reaction is (2R,3S)-3-isopropylmalate = (2S)-2-isopropylmalate. Its pathway is amino-acid biosynthesis; L-leucine biosynthesis; L-leucine from 3-methyl-2-oxobutanoate: step 2/4. Its function is as follows. Catalyzes the isomerization between 2-isopropylmalate and 3-isopropylmalate, via the formation of 2-isopropylmaleate. The sequence is that of 3-isopropylmalate dehydratase large subunit from Mycobacterium marinum (strain ATCC BAA-535 / M).